A 497-amino-acid polypeptide reads, in one-letter code: Nuclear pore complex protein npp-16 (497 aa).

3 disordered regions span residues valine 76–lysine 95, threonine 210–lysine 308, and methionine 359–valine 379. Basic and acidic residues-rich tracts occupy residues lysine 231–proline 240 and lysine 250–alanine 260. The interval glutamate 390–valine 497 is ranBD1.

Interacts with importin beta imb-1. Interacts with DNA-directed RNA polymerase III subunit rpc-1. Interacts with TATA-box-binding protein tbp-1. Interacts with GTF3C5 homolog tftc-5. Interacts with GTF3C3 homolog tftc-3.

The protein resides in the nucleus. The protein localises to the nuclear pore complex. It is found in the nucleus membrane. In terms of biological role, component of the nuclear pore complex. Plays a direct role in nuclear protein import. Required for anoxia-induced prophase arrest; may function in concert with cdk-1 to arrest prophase blastomeres in response to anoxia. The polypeptide is Nuclear pore complex protein npp-16 (Caenorhabditis elegans).